Reading from the N-terminus, the 490-residue chain is Cobyric acid synthase (490 aa).

Residues 252 to 439 (RLKVVVPVLP…LHGLFESTAA (188 aa)) form the GATase cobBQ-type domain. Cysteine 333 acts as the Nucleophile in catalysis. The active site involves histidine 431.

This sequence belongs to the CobB/CobQ family. CobQ subfamily.

Its pathway is cofactor biosynthesis; adenosylcobalamin biosynthesis. Catalyzes amidations at positions B, D, E, and G on adenosylcobyrinic A,C-diamide. NH(2) groups are provided by glutamine, and one molecule of ATP is hydrogenolyzed for each amidation. The polypeptide is Cobyric acid synthase (Pseudomonas aeruginosa (strain ATCC 15692 / DSM 22644 / CIP 104116 / JCM 14847 / LMG 12228 / 1C / PRS 101 / PAO1)).